A 546-amino-acid polypeptide reads, in one-letter code: Chaperonin GroEL (546 aa).

ATP contacts are provided by residues 30–33 (TLGP), lysine 51, 87–91 (DGTTT), glycine 415, and aspartate 496. The tract at residues 526 to 546 (PEDKPAPAMPGGMGGMGGMDF) is disordered. Positions 536-546 (GGMGGMGGMDF) are enriched in gly residues.

It belongs to the chaperonin (HSP60) family. In terms of assembly, forms a cylinder of 14 subunits composed of two heptameric rings stacked back-to-back. Interacts with the co-chaperonin GroES.

It is found in the cytoplasm. The enzyme catalyses ATP + H2O + a folded polypeptide = ADP + phosphate + an unfolded polypeptide.. Its function is as follows. Together with its co-chaperonin GroES, plays an essential role in assisting protein folding. The GroEL-GroES system forms a nano-cage that allows encapsulation of the non-native substrate proteins and provides a physical environment optimized to promote and accelerate protein folding. This Zymomonas mobilis subsp. mobilis (strain ATCC 31821 / ZM4 / CP4) protein is Chaperonin GroEL.